A 114-amino-acid chain; its full sequence is MLKKILSLFKKEEPKTEEKPTEVEEKKEEREEKEEKKVRELTPQELELFKRAMGITPHNYWQWASRTNNFKLLTDGEWVWVEGYEEHIGKQLPLNQARAWSWEFIKNRLKELNL.

The segment at 1–37 is disordered; it reads MLKKILSLFKKEEPKTEEKPTEVEEKKEEREEKEEKK. The segment covering 9 to 37 has biased composition (basic and acidic residues); it reads FKKEEPKTEEKPTEVEEKKEEREEKEEKK.

This is an uncharacterized protein from Aquifex aeolicus (strain VF5).